The sequence spans 363 residues: Dihydroorotate dehydrogenase (quinone) (363 aa).

FMN contacts are provided by residues 70 to 74 (AGFDK) and threonine 94. Position 74 (lysine 74) interacts with substrate. 119-123 (NRMGF) provides a ligand contact to substrate. FMN is bound by residues asparagine 147 and asparagine 180. Position 180 (asparagine 180) interacts with substrate. The active-site Nucleophile is serine 183. Asparagine 185 is a substrate binding site. FMN-binding residues include lysine 216 and threonine 244. 245–246 (NT) provides a ligand contact to substrate. Residues glycine 270, glycine 299, and 320-321 (YT) each bind FMN.

The protein belongs to the dihydroorotate dehydrogenase family. Type 2 subfamily. Monomer. Requires FMN as cofactor.

Its subcellular location is the cell membrane. The enzyme catalyses (S)-dihydroorotate + a quinone = orotate + a quinol. It functions in the pathway pyrimidine metabolism; UMP biosynthesis via de novo pathway; orotate from (S)-dihydroorotate (quinone route): step 1/1. Catalyzes the conversion of dihydroorotate to orotate with quinone as electron acceptor. This chain is Dihydroorotate dehydrogenase (quinone), found in Corynebacterium diphtheriae (strain ATCC 700971 / NCTC 13129 / Biotype gravis).